Reading from the N-terminus, the 237-residue chain is Ribonuclease PH (237 aa).

Phosphate contacts are provided by residues R86 and 124–126 (GTR).

It belongs to the RNase PH family. In terms of assembly, homohexameric ring arranged as a trimer of dimers.

The catalysed reaction is tRNA(n+1) + phosphate = tRNA(n) + a ribonucleoside 5'-diphosphate. Phosphorolytic 3'-5' exoribonuclease that plays an important role in tRNA 3'-end maturation. Removes nucleotide residues following the 3'-CCA terminus of tRNAs; can also add nucleotides to the ends of RNA molecules by using nucleoside diphosphates as substrates, but this may not be physiologically important. Probably plays a role in initiation of 16S rRNA degradation (leading to ribosome degradation) during starvation. The polypeptide is Ribonuclease PH (Roseobacter denitrificans (strain ATCC 33942 / OCh 114) (Erythrobacter sp. (strain OCh 114))).